We begin with the raw amino-acid sequence, 126 residues long: Ribosome-binding factor A (126 aa).

This sequence belongs to the RbfA family. As to quaternary structure, monomer. Binds 30S ribosomal subunits, but not 50S ribosomal subunits or 70S ribosomes.

It localises to the cytoplasm. Functionally, one of several proteins that assist in the late maturation steps of the functional core of the 30S ribosomal subunit. Associates with free 30S ribosomal subunits (but not with 30S subunits that are part of 70S ribosomes or polysomes). Required for efficient processing of 16S rRNA. May interact with the 5'-terminal helix region of 16S rRNA. This is Ribosome-binding factor A from Geobacillus sp. (strain WCH70).